The sequence spans 372 residues: RNA polymerase sigma factor SigA (372 aa).

Residues 139 to 209 (LAEANLRLVV…TRAIADQART (71 aa)) form a sigma-70 factor domain-2 region. Residues 163–166 (DLIQ) carry the Interaction with polymerase core subunit RpoC motif. The tract at residues 218–294 (ETINKLIRVQ…DQDALAPSDA (77 aa)) is sigma-70 factor domain-3. Positions 307–360 (VLDTLTDREENVLRLRFGLDDGRTRTLEEVGKVFGVTRERIRQIEAKALRKLRH) are sigma-70 factor domain-4. Positions 333–352 (LEEVGKVFGVTRERIRQIEA) form a DNA-binding region, H-T-H motif.

The protein belongs to the sigma-70 factor family. RpoD/SigA subfamily. Interacts transiently with the RNA polymerase catalytic core.

It localises to the cytoplasm. Sigma factors are initiation factors that promote the attachment of RNA polymerase to specific initiation sites and are then released. This sigma factor is the primary sigma factor during exponential growth. The polypeptide is RNA polymerase sigma factor SigA (Halalkalibacterium halodurans (strain ATCC BAA-125 / DSM 18197 / FERM 7344 / JCM 9153 / C-125) (Bacillus halodurans)).